The primary structure comprises 227 residues: Phosphoribosylformylglycinamidine synthase subunit PurQ (227 aa).

The region spanning Lys2–Asn226 is the Glutamine amidotransferase type-1 domain. Catalysis depends on Cys86, which acts as the Nucleophile. Active-site residues include His195 and Glu197.

In terms of assembly, part of the FGAM synthase complex composed of 1 PurL, 1 PurQ and 2 PurS subunits.

The protein resides in the cytoplasm. The enzyme catalyses N(2)-formyl-N(1)-(5-phospho-beta-D-ribosyl)glycinamide + L-glutamine + ATP + H2O = 2-formamido-N(1)-(5-O-phospho-beta-D-ribosyl)acetamidine + L-glutamate + ADP + phosphate + H(+). The catalysed reaction is L-glutamine + H2O = L-glutamate + NH4(+). Its pathway is purine metabolism; IMP biosynthesis via de novo pathway; 5-amino-1-(5-phospho-D-ribosyl)imidazole from N(2)-formyl-N(1)-(5-phospho-D-ribosyl)glycinamide: step 1/2. Part of the phosphoribosylformylglycinamidine synthase complex involved in the purines biosynthetic pathway. Catalyzes the ATP-dependent conversion of formylglycinamide ribonucleotide (FGAR) and glutamine to yield formylglycinamidine ribonucleotide (FGAM) and glutamate. The FGAM synthase complex is composed of three subunits. PurQ produces an ammonia molecule by converting glutamine to glutamate. PurL transfers the ammonia molecule to FGAR to form FGAM in an ATP-dependent manner. PurS interacts with PurQ and PurL and is thought to assist in the transfer of the ammonia molecule from PurQ to PurL. The polypeptide is Phosphoribosylformylglycinamidine synthase subunit PurQ (Listeria welshimeri serovar 6b (strain ATCC 35897 / DSM 20650 / CCUG 15529 / CIP 8149 / NCTC 11857 / SLCC 5334 / V8)).